The sequence spans 495 residues: MSRSMALSQLLPDVALPHDVQVSGLVMDSRTVAPGDAFVAIAGFGAHGLGFVEQARANGATAVLFEPPAPDGLPVPVDAIAVPGLRARLGVMADQFHGRPSHAMRMVGVTGTNGKTSTVQLLAQALTLLGTPTGTLGTLGVGLYGAAVSTGFTTPLVLPTHALLAQLRDEGAQAVAMEVSSHALDQGRVDAVHFDVAVFTNLTRDHLDYHGEMAQYGAAKAKLFTRPGLKAAVVNLDDGFGRTLFASRDPVLRAIGVSSRAHADASVSAQALQLDHNGINFALNIQGEVHPVHSPLLGRFNVDNLLAVAGALWALDIAPAQIATVLGQLQPIHGRMNRLGGAHGAPLVVVDYAHTPDALEQALSSLRSHAQDRLICVFGCGGERDTGKRPQMAAIAELNADVAIVTDDNPRGEDGDAIVADILRGFARPDAAIVQRDRAAAIHQAIAMASASDIVLIAGKGHEPYQEVAGVRHAFDDAIVAAQALLPRTVLGVRP.

Serine 29 contributes to the UDP-N-acetyl-alpha-D-muramoyl-L-alanyl-D-glutamate binding site. Residue 111–117 (GTNGKTS) participates in ATP binding. Residues 153-154 (TT), serine 180, glutamine 186, and arginine 188 each bind UDP-N-acetyl-alpha-D-muramoyl-L-alanyl-D-glutamate. Lysine 220 carries the post-translational modification N6-carboxylysine. Residues arginine 384, 408-411 (DNPR), glycine 459, and glutamate 463 each bind meso-2,6-diaminopimelate. The Meso-diaminopimelate recognition motif motif lies at 408–411 (DNPR).

Belongs to the MurCDEF family. MurE subfamily. Mg(2+) is required as a cofactor. Carboxylation is probably crucial for Mg(2+) binding and, consequently, for the gamma-phosphate positioning of ATP.

It is found in the cytoplasm. It catalyses the reaction UDP-N-acetyl-alpha-D-muramoyl-L-alanyl-D-glutamate + meso-2,6-diaminopimelate + ATP = UDP-N-acetyl-alpha-D-muramoyl-L-alanyl-gamma-D-glutamyl-meso-2,6-diaminopimelate + ADP + phosphate + H(+). The protein operates within cell wall biogenesis; peptidoglycan biosynthesis. Functionally, catalyzes the addition of meso-diaminopimelic acid to the nucleotide precursor UDP-N-acetylmuramoyl-L-alanyl-D-glutamate (UMAG) in the biosynthesis of bacterial cell-wall peptidoglycan. This Xanthomonas oryzae pv. oryzae (strain MAFF 311018) protein is UDP-N-acetylmuramoyl-L-alanyl-D-glutamate--2,6-diaminopimelate ligase.